The following is a 193-amino-acid chain: Inosine triphosphate pyrophosphatase (193 aa).

10 to 15 (TGNANK) contacts ITP. Mg(2+) is bound at residue glutamate 42. ITP-binding positions include lysine 54, 70-71 (DT), lysine 87, 146-149 (FGWD), lysine 169, and 174-175 (HR).

The protein belongs to the HAM1 NTPase family. Homodimer. Requires Mg(2+) as cofactor. The cofactor is Mn(2+).

The protein resides in the cytoplasm. The protein localises to the nucleus. It catalyses the reaction ITP + H2O = IMP + diphosphate + H(+). The catalysed reaction is dITP + H2O = dIMP + diphosphate + H(+). It carries out the reaction XTP + H2O = XMP + diphosphate + H(+). Its function is as follows. Pyrophosphatase that hydrolyzes non-canonical purine nucleotides such as inosine triphosphate (ITP), deoxyinosine triphosphate (dITP) or xanthosine 5'-triphosphate (XTP) to their respective monophosphate derivatives. The enzyme does not distinguish between the deoxy- and ribose forms. Probably excludes non-canonical purines from RNA and DNA precursor pools, thus preventing their incorporation into RNA and DNA and avoiding chromosomal lesions. In Mycosarcoma maydis (Corn smut fungus), this protein is Inosine triphosphate pyrophosphatase.